The primary structure comprises 158 residues: MSVSVCPCGTGNLLDACCGHYHAGTPAPDAQSLMRSRYSAYVLGLVDYLVGTTLPAQQPGLDRAGMAAWSAQSTWLGLEVESAEVFGGQPEHAFVTFTARWHDTDGDHQHRERSAFVQHAGRWYFIDPTVPLNAGRNDPCPCASGQKFKKCCASYLGS.

The protein belongs to the UPF0225 family.

The chain is UPF0225 protein PSEEN1229 from Pseudomonas entomophila (strain L48).